The following is a 194-amino-acid chain: Endoribonuclease ToxN (194 aa).

Residues 114–182 (MLKQYLFLKE…DQAKERDKAR (69 aa)) are a coiled coil. Residues 171–182 (ERDQAKERDKAR) show a composition bias toward basic and acidic residues. Residues 171–194 (ERDQAKERDKARRIAYMRQMGRER) are disordered.

The protein belongs to the ToxN/AbiQ toxin family. In terms of assembly, one ToxN monomer binds to a 34-nt-long single repeat of the ToxI RNA; this complex forms a triangular heterohexameric complex with ToxN connected by the ToxI RNA to another toxin molecule. The ToxI repeats are cleavage products of their precursor. The ToxI repeat forms a pseudoknot which occludes the toxin active site.

Toxic component of a type III toxin-antitoxin (TA) system. An endoribonuclease which cleaves between the first and second A of AAAAA sequences; it tolerates other nucleotides in positions +2 and +4 of the consensus. Digests cognate antitoxin RNA ToxI as shown by the 2'-3'-cyclic phosphate at the 3' end of the 34-nt repeats and probably other RNAs. Inhibits growth when expressed in E.coli without causing cell lysis; this bacteriostatic effect is neutralized by cognate RNA antitoxin ToxI, which has 2.9 nearly identical 34 nucleotide-long repeats. Non-cognate antitoxin RNA from P.atrosepticum does not inhibit this toxin. The toxin-antitoxin pair function in plasmid maintenance (a plasmid addiction system), but unlike its P.atrosepticum homolog it is not seen to confer resistance to bacteriophages. The chain is Endoribonuclease ToxN from Bacillus thuringiensis subsp. kurstaki.